A 692-amino-acid chain; its full sequence is Vitamin B12-dependent ribonucleoside-diphosphate reductase (692 aa).

The ATP-cone domain occupies A7–R95. Substrate-binding positions include S177, G192–C193, G221, N375–E379, and P520–I524. C193 and C388 form a disulfide bridge. N375 acts as the Proton acceptor in catalysis. The active-site Cysteine radical intermediate is C377. E379 serves as the catalytic Proton acceptor.

This sequence belongs to the ribonucleoside diphosphate reductase class-2 family. Adenosylcob(III)alamin is required as a cofactor.

The catalysed reaction is a 2'-deoxyribonucleoside 5'-diphosphate + [thioredoxin]-disulfide + H2O = a ribonucleoside 5'-diphosphate + [thioredoxin]-dithiol. In terms of biological role, provides the precursors necessary for DNA synthesis. Catalyzes the biosynthesis of deoxyribonucleotides from the corresponding ribonucleotides. The protein is Vitamin B12-dependent ribonucleoside-diphosphate reductase (nrdZ) of Mycobacterium tuberculosis (strain CDC 1551 / Oshkosh).